The primary structure comprises 247 residues: Carboxy-S-adenosyl-L-methionine synthase (247 aa).

S-adenosyl-L-methionine-binding positions include Y39, 89 to 90, 117 to 118, N132, and R199; these read DN and DI.

Belongs to the class I-like SAM-binding methyltransferase superfamily. Cx-SAM synthase family. As to quaternary structure, homodimer.

It carries out the reaction prephenate + S-adenosyl-L-methionine = carboxy-S-adenosyl-L-methionine + 3-phenylpyruvate + H2O. Functionally, catalyzes the conversion of S-adenosyl-L-methionine (SAM) to carboxy-S-adenosyl-L-methionine (Cx-SAM). This is Carboxy-S-adenosyl-L-methionine synthase from Sodalis glossinidius (strain morsitans).